Here is a 427-residue protein sequence, read N- to C-terminus: 3-phosphoshikimate 1-carboxyvinyltransferase (427 aa).

Residues Lys20, Ser21, and Arg25 each contribute to the 3-phosphoshikimate site. Lys20 is a phosphoenolpyruvate binding site. Residues Gly92 and Arg120 each coordinate phosphoenolpyruvate. 3-phosphoshikimate-binding residues include Ser166, Gln168, Asp312, and Lys339. Gln168 provides a ligand contact to phosphoenolpyruvate. Asp312 (proton acceptor) is an active-site residue. Arg343 and Arg385 together coordinate phosphoenolpyruvate.

The protein belongs to the EPSP synthase family. Monomer.

It is found in the cytoplasm. The enzyme catalyses 3-phosphoshikimate + phosphoenolpyruvate = 5-O-(1-carboxyvinyl)-3-phosphoshikimate + phosphate. The protein operates within metabolic intermediate biosynthesis; chorismate biosynthesis; chorismate from D-erythrose 4-phosphate and phosphoenolpyruvate: step 6/7. In terms of biological role, catalyzes the transfer of the enolpyruvyl moiety of phosphoenolpyruvate (PEP) to the 5-hydroxyl of shikimate-3-phosphate (S3P) to produce enolpyruvyl shikimate-3-phosphate and inorganic phosphate. In Streptococcus gordonii (strain Challis / ATCC 35105 / BCRC 15272 / CH1 / DL1 / V288), this protein is 3-phosphoshikimate 1-carboxyvinyltransferase.